Consider the following 1164-residue polypeptide: Phytochrome D (1164 aa).

The interval 1-55 (MVSGGGSKTSGGEAASSGHRRSRHTSAAEQAQSSANKALRSQNQQPQNHGGGTES) is disordered. Positions 25 to 55 (TSAAEQAQSSANKALRSQNQQPQNHGGGTES) are enriched in polar residues. The 183-residue stretch at 255–437 (DIKLLCDTVV…AFGLQLNMEL (183 aa)) folds into the GAF domain. Cysteine 360 contacts phytochromobilin. PAS domains lie at 656 to 727 (VARE…LKGD) and 790 to 861 (DYKA…MIVL). The Histidine kinase domain occupies 938–1157 (YIFQVIKNPL…LIVIELPVPL (220 aa)).

The protein belongs to the phytochrome family. Homodimer. Post-translationally, contains one covalently linked phytochromobilin chromophore.

Its function is as follows. Regulatory photoreceptor which exists in two forms that are reversibly interconvertible by light: the Pr form that absorbs maximally in the red region of the spectrum and the Pfr form that absorbs maximally in the far-red region. Photoconversion of Pr to Pfr induces an array of morphogenic responses, whereas reconversion of Pfr to Pr cancels the induction of those responses. Pfr controls the expression of a number of nuclear genes including those encoding the small subunit of ribulose-bisphosphate carboxylase, chlorophyll A/B binding protein, protochlorophyllide reductase, rRNA, etc. It also controls the expression of its own gene(s) in a negative feedback fashion. The protein is Phytochrome D (PHYD) of Arabidopsis thaliana (Mouse-ear cress).